A 279-amino-acid chain; its full sequence is NAD kinase (279 aa).

The active-site Proton acceptor is Asp-61. NAD(+)-binding positions include 61 to 62 (DG), 138 to 139 (ND), Lys-149, Lys-166, Asp-168, and 179 to 184 (TGYSFS).

The protein belongs to the NAD kinase family. The cofactor is a divalent metal cation.

The protein resides in the cytoplasm. It carries out the reaction NAD(+) + ATP = ADP + NADP(+) + H(+). In terms of biological role, involved in the regulation of the intracellular balance of NAD and NADP, and is a key enzyme in the biosynthesis of NADP. Catalyzes specifically the phosphorylation on 2'-hydroxyl of the adenosine moiety of NAD to yield NADP. This Borrelia garinii subsp. bavariensis (strain ATCC BAA-2496 / DSM 23469 / PBi) (Borreliella bavariensis) protein is NAD kinase.